The sequence spans 292 residues: Ribosomal protein L11 methyltransferase (292 aa).

Positions 136, 159, 181, and 228 each coordinate S-adenosyl-L-methionine.

It belongs to the methyltransferase superfamily. PrmA family.

The protein resides in the cytoplasm. It carries out the reaction L-lysyl-[protein] + 3 S-adenosyl-L-methionine = N(6),N(6),N(6)-trimethyl-L-lysyl-[protein] + 3 S-adenosyl-L-homocysteine + 3 H(+). Its function is as follows. Methylates ribosomal protein L11. This Rhizobium leguminosarum bv. trifolii (strain WSM2304) protein is Ribosomal protein L11 methyltransferase.